We begin with the raw amino-acid sequence, 453 residues long: Crh-like protein CRH11 (453 aa).

Residues 1-21 (MKFTTLATIASTLLFAANANA) form the signal peptide. A disulfide bridge links Cys24 with Cys32. The GH16 domain occupies 28–227 (KSSDCSPVPA…WAGGITDYSQ (200 aa)). Residue Glu119 is the Nucleophile of the active site. Glu123 acts as the Proton donor in catalysis. Chitin-binding residues include Glu123, Trp204, and Thr215. Disordered regions lie at residues 281–343 (LESG…SEKS), 362–397 (KTTV…PASA), and 410–430 (GDAA…TENN). Composition is skewed to low complexity over residues 286–343 (SVDS…SEKS), 363–397 (TTVT…PASA), and 412–425 (AAPS…PSVS). The N-linked (GlcNAc...) asparagine glycan is linked to Asn290. Asn430 is lipidated: GPI-anchor amidated asparagine. The propeptide at 431–453 (GAVSVAKTTSLFGFVALIGFLFV) is removed in mature form.

This sequence belongs to the glycosyl hydrolase 16 family. CRH1 subfamily. The GPI-anchor is attached to the protein in the endoplasmic reticulum and serves to target the protein to the cell surface. There, the glucosamine-inositol phospholipid moiety is cleaved off and the GPI-modified mannoprotein is covalently attached via its lipidless GPI glycan remnant to the 1,6-beta-glucan of the outer cell wall layer.

Its subcellular location is the secreted. The protein localises to the cell wall. It localises to the membrane. It carries out the reaction Random endo-hydrolysis of N-acetyl-beta-D-glucosaminide (1-&gt;4)-beta-linkages in chitin and chitodextrins.. Functionally, dual chitinase/transglycosylase that plays a role in cell wall architecture. Chitinase and transglycosylase activities are coupled. Required for the polysaccharide cross-linking at the septa and the cell wall. More specifically, transfers chitin to 1,6-beta-glucan in the cell wall. Plays an important role in fungal pathogenesis via its functions in cell wall assembly and regeneration, filamentation, and adherence to host cells. This Candida albicans (strain SC5314 / ATCC MYA-2876) (Yeast) protein is Crh-like protein CRH11 (CRH11).